The chain runs to 305 residues: Glycine cleavage system transcriptional activator (305 aa).

Residues 6 to 63 form the HTH lysR-type domain; that stretch reads PPLNALRVFDAAARHLSFTRAAEELFVTQAAVSHQIKSLEDFLGLKLFRRRNRSLLLT. Positions 23-42 form a DNA-binding region, H-T-H motif; sequence FTRAAEELFVTQAAVSHQIK.

The protein belongs to the LysR transcriptional regulatory family.

The protein localises to the cytoplasm. Functionally, regulatory protein for the glycine cleavage system operon (gcv). Mediates activation of gcv by glycine and repression by purines. GcvA is negatively autoregulated. Binds to three sites upstream of the gcv promoter. This is Glycine cleavage system transcriptional activator (gcvA) from Escherichia coli O157:H7.